Here is a 208-residue protein sequence, read N- to C-terminus: Protein late bloomer (208 aa).

Helical transmembrane passes span 10–30 (IASI…IGWI), 41–61 (FVIA…LGIF), 67–87 (SVVL…LQIV), and 174–194 (FIIV…LAVF).

The protein belongs to the tetraspanin (TM4SF) family. As to expression, transiently expressed on motor axons, growth cones and terminal arbors.

Its subcellular location is the membrane. It is found in the synapse. Facilitates synapse formation. The polypeptide is Protein late bloomer (lbm) (Drosophila melanogaster (Fruit fly)).